The chain runs to 689 residues: Bifunctional protein GAL10 (689 aa).

The interval 1–345 is galactowaldenase; the sequence is MSYILVTGGA…TTKNPFGFQI (345 aa). 3-34 contacts NAD(+); that stretch reads YILVTGGAGYIGSHTVVELVNNGYNVVVVDNL. The interval 346 to 689 is mutarotase; sequence NNYSWTKFDS…SYTIYRFENF (344 aa). Residue histidine 534 is the For mutarotase activity of the active site.

The protein in the N-terminal section; belongs to the NAD(P)-dependent epimerase/dehydratase family. It in the C-terminal section; belongs to the aldose epimerase family. NAD(+) is required as a cofactor.

The catalysed reaction is UDP-alpha-D-glucose = UDP-alpha-D-galactose. The enzyme catalyses alpha-D-glucose = beta-D-glucose. It functions in the pathway carbohydrate metabolism; galactose metabolism. It participates in carbohydrate metabolism; hexose metabolism. Mutarotase converts alpha-aldose to the beta-anomer. It is active on D-glucose, L-arabinose, D-xylose, D-galactose, maltose and lactose. In Pachysolen tannophilus (Yeast), this protein is Bifunctional protein GAL10 (GAL10).